Here is a 790-residue protein sequence, read N- to C-terminus: uncharacterized protein (790 aa).

Residues 37-172 (APVPVPVNGN…NGGVIDAKIK (136 aa)) enclose the TBDR plug domain. The TBDR beta-barrel domain maps to 178–790 (DSKVKLGYRT…TFWLDVSMKF (613 aa)).

Belongs to the TonB-dependent receptor family.

The protein resides in the cell outer membrane. This is an uncharacterized protein from Escherichia coli (strain K12).